The primary structure comprises 101 residues: Small ribosomal subunit protein bS18c (101 aa).

Belongs to the bacterial ribosomal protein bS18 family. In terms of assembly, part of the 30S ribosomal subunit.

It localises to the plastid. The protein resides in the chloroplast. This chain is Small ribosomal subunit protein bS18c, found in Nymphaea alba (White water-lily).